We begin with the raw amino-acid sequence, 356 residues long: Histidinol-phosphate aminotransferase 1 (356 aa).

Lys-210 is subject to N6-(pyridoxal phosphate)lysine.

Belongs to the class-II pyridoxal-phosphate-dependent aminotransferase family. Histidinol-phosphate aminotransferase subfamily. Homodimer. It depends on pyridoxal 5'-phosphate as a cofactor.

It catalyses the reaction L-histidinol phosphate + 2-oxoglutarate = 3-(imidazol-4-yl)-2-oxopropyl phosphate + L-glutamate. It functions in the pathway amino-acid biosynthesis; L-histidine biosynthesis; L-histidine from 5-phospho-alpha-D-ribose 1-diphosphate: step 7/9. This Hydrogenovibrio crunogenus (strain DSM 25203 / XCL-2) (Thiomicrospira crunogena) protein is Histidinol-phosphate aminotransferase 1.